We begin with the raw amino-acid sequence, 218 residues long: dTTP/UTP pyrophosphatase (218 aa).

Residue D76 is the Proton acceptor of the active site.

Belongs to the Maf family. YhdE subfamily. It depends on a divalent metal cation as a cofactor.

The protein localises to the cytoplasm. The catalysed reaction is dTTP + H2O = dTMP + diphosphate + H(+). It carries out the reaction UTP + H2O = UMP + diphosphate + H(+). Nucleoside triphosphate pyrophosphatase that hydrolyzes dTTP and UTP. May have a dual role in cell division arrest and in preventing the incorporation of modified nucleotides into cellular nucleic acids. This chain is dTTP/UTP pyrophosphatase, found in Cytophaga hutchinsonii (strain ATCC 33406 / DSM 1761 / CIP 103989 / NBRC 15051 / NCIMB 9469 / D465).